We begin with the raw amino-acid sequence, 483 residues long: Chromosomal replication initiator protein DnaA (483 aa).

The tract at residues methionine 1–arginine 71 is domain I, interacts with DnaA modulators. Residues arginine 71 to serine 145 form a domain II region. Residues arginine 146 to alanine 362 are domain III, AAA+ region. ATP-binding residues include glycine 190, glycine 192, lysine 193, and threonine 194. Positions arginine 363–glycine 483 are domain IV, binds dsDNA.

It belongs to the DnaA family. As to quaternary structure, oligomerizes as a right-handed, spiral filament on DNA at oriC.

Its subcellular location is the cytoplasm. Its function is as follows. Plays an essential role in the initiation and regulation of chromosomal replication. ATP-DnaA binds to the origin of replication (oriC) to initiate formation of the DNA replication initiation complex once per cell cycle. Binds the DnaA box (a 9 base pair repeat at the origin) and separates the double-stranded (ds)DNA. Forms a right-handed helical filament on oriC DNA; dsDNA binds to the exterior of the filament while single-stranded (ss)DNA is stabiized in the filament's interior. The ATP-DnaA-oriC complex binds and stabilizes one strand of the AT-rich DNA unwinding element (DUE), permitting loading of DNA polymerase. After initiation quickly degrades to an ADP-DnaA complex that is not apt for DNA replication. Binds acidic phospholipids. This is Chromosomal replication initiator protein DnaA from Bordetella avium (strain 197N).